Reading from the N-terminus, the 262-residue chain is 7alpha-hydroxysteroid dehydrogenase (262 aa).

Residues Ser13 to Ile18, Arg38, Asn63 to Ala64, and Asn90 each bind NADP(+). Residues Thr145 and Tyr158 each coordinate taurochenodeoxycholate. NADP(+)-binding positions include Tyr158, Lys162, and Ile191–Ala195. The active-site Proton acceptor is the Tyr158.

It belongs to the short-chain dehydrogenases/reductases (SDR) family. In terms of assembly, homotetramer. A dynamic equilibrium between dimers and tetramers seems to exist.

It carries out the reaction cholate + NADP(+) = 3alpha,12alpha-dihydroxy-7-oxo-5beta-cholanate + NADPH + H(+). The enzyme catalyses chenodeoxycholate + NADP(+) = 7-oxolithocholate + NADPH + H(+). It catalyses the reaction 3alpha,7alpha-dihydroxy-12-oxo-5beta-cholanate + NADP(+) = 7,12-dioxo-lithocholate + NADPH + H(+). The catalysed reaction is 7alpha-hydroxy-3,12-dioxo-5beta-cholanate + NADP(+) = dehydrocholate + NADPH + H(+). It carries out the reaction glycochenodeoxycholate + NADP(+) = 7-oxoglycolithocholate + NADPH + H(+). The enzyme catalyses taurochenodeoxycholate + NADP(+) = 7-oxotaurolithocholate + NADPH + H(+). Activated by metal ions such as Mg(2+), Na(+) and K(+). Functionally, 7alpha-hydroxysteroid dehydrogenase that catalyzes the NADP(+)-dependent oxidation of the 7alpha-hydroxy group of 7alpha-hydroxysteroids, such as cholate, chenodeoxycholate, glycochenodeoxycholate and taurochenodeoxycholate, to the corresponding 7-oxosteroids. Is also able to catalyze the reverse reduction reactions. Together with 7beta-HSDH encoded in the adjacent gene, is likely involved in the epimerization of the hydroxy group at C-7 of primary bile acids through 7-keto bile acid intermediates. In Clostridium sardiniense (Clostridium absonum), this protein is 7alpha-hydroxysteroid dehydrogenase.